The sequence spans 222 residues: Superoxide dismutase [Mn], mitochondrial (222 aa).

The N-terminal 24 residues, 1 to 24 (MLSRAACSTSRRLVPALSVLGSRQ), are a transit peptide targeting the mitochondrion. His50 lines the Mn(2+) pocket. 3'-nitrotyrosine is present on Tyr58. 2 positions are modified to N6-acetyllysine; alternate: Lys68 and Lys75. An N6-succinyllysine; alternate mark is found at Lys68 and Lys75. His98 provides a ligand contact to Mn(2+). Residues Lys122 and Lys130 each carry the N6-acetyllysine; alternate modification. Lys122 and Lys130 each carry N6-succinyllysine; alternate. The Mn(2+) site is built by Asp183 and His187. The residue at position 202 (Lys202) is an N6-acetyllysine.

Belongs to the iron/manganese superoxide dismutase family. In terms of assembly, homotetramer. Requires Mn(2+) as cofactor. Nitrated under oxidative stress. Nitration coupled with oxidation inhibits the catalytic activity. Post-translationally, acetylation at Lys-122 decreases enzymatic activity. Deacetylated by SIRT3 upon exposure to ionizing radiations or after long fasting. In terms of processing, polyubiquitinated; leading to proteasomal degradation. Deubiquitinated by USP36 which increases protein stability.

The protein resides in the mitochondrion matrix. The catalysed reaction is 2 superoxide + 2 H(+) = H2O2 + O2. Its function is as follows. Destroys superoxide anion radicals which are normally produced within the cells and which are toxic to biological systems. This Bos taurus (Bovine) protein is Superoxide dismutase [Mn], mitochondrial (SOD2).